Here is a 461-residue protein sequence, read N- to C-terminus: Cysteine--tRNA ligase (461 aa).

Cys-28 serves as a coordination point for Zn(2+). The short motif at 30–40 (ITVYDLCHIGH) is the 'HIGH' region element. Zn(2+) contacts are provided by Cys-209, His-234, and Glu-238. The 'KMSKS' region signature appears at 266-270 (KMSKS). Lys-269 serves as a coordination point for ATP.

The protein belongs to the class-I aminoacyl-tRNA synthetase family. As to quaternary structure, monomer. Requires Zn(2+) as cofactor.

It localises to the cytoplasm. It carries out the reaction tRNA(Cys) + L-cysteine + ATP = L-cysteinyl-tRNA(Cys) + AMP + diphosphate. The chain is Cysteine--tRNA ligase from Escherichia coli O6:K15:H31 (strain 536 / UPEC).